A 787-amino-acid chain; its full sequence is uncharacterized protein (787 aa).

Methionine 1 is modified (N-acetylmethionine). Disordered regions lie at residues methionine 1–lysine 115, threonine 130–glutamate 200, and valine 217–aspartate 238. The segment covering valine 36–threonine 54 has biased composition (polar residues). Serine 63 carries the post-translational modification Phosphoserine. Residues threonine 130–histidine 142 show a composition bias toward polar residues. Residues serine 160–threonine 169 show a composition bias toward low complexity. Basic and acidic residues predominate over residues threonine 170 to serine 184. Over residues serine 218–asparagine 230 the composition is skewed to low complexity. 10 positions are modified to phosphoserine: serine 254, serine 313, serine 342, serine 345, serine 390, serine 477, serine 492, serine 546, serine 683, and serine 699.

It is found in the cytoplasm. This is an uncharacterized protein from Saccharomyces cerevisiae (strain ATCC 204508 / S288c) (Baker's yeast).